Here is a 282-residue protein sequence, read N- to C-terminus: Elongation factor Ts (282 aa).

The segment at 81–84 (TDFV) is involved in Mg(2+) ion dislocation from EF-Tu. Over residues 218-270 (KPAQPAQVAEVAAAPPAEPVADQPAAEPPAESVAPEPVVAESADAEPAPAAEG) the composition is skewed to low complexity. The disordered stretch occupies residues 218–282 (KPAQPAQVAE…SKKGSTKKKK (65 aa)). Basic residues predominate over residues 273–282 (SKKGSTKKKK).

It belongs to the EF-Ts family.

The protein resides in the cytoplasm. Associates with the EF-Tu.GDP complex and induces the exchange of GDP to GTP. It remains bound to the aminoacyl-tRNA.EF-Tu.GTP complex up to the GTP hydrolysis stage on the ribosome. The polypeptide is Elongation factor Ts (Synechococcus sp. (strain JA-3-3Ab) (Cyanobacteria bacterium Yellowstone A-Prime)).